The following is a 277-amino-acid chain: B3 domain-containing protein At3g19184 (277 aa).

The tract at residues 33–94 (QSLRVSSSSS…LERRPRRSSR (62 aa)) is disordered. The segment at residues 130–221 (FTKPMLQSHV…TFKVYIIRVN (92 aa)) is a DNA-binding region (TF-B3). Residues 224–250 (ANNDSDGNEVNDDDSDGNEEDRDNDNE) are compositionally biased toward acidic residues. Residues 224–277 (ANNDSDGNEVNDDDSDGNEEDRDNDNESNEKQKETVSEGRQLRSSGKRKRRGRK) are disordered. Residues 251 to 264 (SNEKQKETVSEGRQ) are compositionally biased toward basic and acidic residues. Positions 268–277 (SGKRKRRGRK) are enriched in basic residues.

It localises to the nucleus. This is B3 domain-containing protein At3g19184 from Arabidopsis thaliana (Mouse-ear cress).